Reading from the N-terminus, the 148-residue chain is MIAQIPFWQRKRLADMTQPEWESLCDGCGKCCLQKLEDEDTGEVYHTDLVCRYMDLDTCGCTVYEQRLKKVPGCTVLTADTVLSYHWLPYTCAYRTLAEGRPLPDWHPLRSGDPDTVHQARVSVRGNVVSEDSVPEEDWEEHIIHWIL.

Belongs to the UPF0260 family.

The chain is UPF0260 protein Maqu_1608 from Marinobacter nauticus (strain ATCC 700491 / DSM 11845 / VT8) (Marinobacter aquaeolei).